The following is a 592-amino-acid chain: A-type ATP synthase subunit A (592 aa).

233–240 (GPFGSGKT) contributes to the ATP binding site.

Belongs to the ATPase alpha/beta chains family. In terms of assembly, has multiple subunits with at least A(3), B(3), C, D, E, F, H, I and proteolipid K(x).

Its subcellular location is the cell membrane. It carries out the reaction ATP + H2O + 4 H(+)(in) = ADP + phosphate + 5 H(+)(out). Functionally, component of the A-type ATP synthase that produces ATP from ADP in the presence of a proton gradient across the membrane. The A chain is the catalytic subunit. The protein is A-type ATP synthase subunit A of Saccharolobus solfataricus (strain ATCC 35092 / DSM 1617 / JCM 11322 / P2) (Sulfolobus solfataricus).